A 262-amino-acid chain; its full sequence is Conserved oligomeric Golgi complex subunit 2 (262 aa).

In terms of assembly, component of the conserved oligomeric Golgi (COG or Sec34/Sec35) complex which consists of eight different proteins COG1-COG8. The COG complex interacts with the Rab GTPase YPT1, the Glogi SNAREs GOS1, SEC22, SED5, VTI1 and YKT6 and the COPI coatomer subunit gamma SEC21.

The protein localises to the golgi apparatus membrane. In terms of biological role, acts as a component of the peripheral membrane COG complex that is involved in intra-Golgi protein trafficking. COG is located at the cis-Golgi, and regulates tethering of retrograde intra-Golgi vesicles and possibly a number of other membrane trafficking events. COG2 is required for ER to Golgi vesicle docking. Not essential for viability. This chain is Conserved oligomeric Golgi complex subunit 2 (COG2), found in Saccharomyces cerevisiae (strain ATCC 204508 / S288c) (Baker's yeast).